The chain runs to 188 residues: ATP synthase subunit delta (188 aa).

Belongs to the ATPase delta chain family. F-type ATPases have 2 components, F(1) - the catalytic core - and F(0) - the membrane proton channel. F(1) has five subunits: alpha(3), beta(3), gamma(1), delta(1), epsilon(1). F(0) has three main subunits: a(1), b(2) and c(10-14). The alpha and beta chains form an alternating ring which encloses part of the gamma chain. F(1) is attached to F(0) by a central stalk formed by the gamma and epsilon chains, while a peripheral stalk is formed by the delta and b chains.

It is found in the cell membrane. Its function is as follows. F(1)F(0) ATP synthase produces ATP from ADP in the presence of a proton or sodium gradient. F-type ATPases consist of two structural domains, F(1) containing the extramembraneous catalytic core and F(0) containing the membrane proton channel, linked together by a central stalk and a peripheral stalk. During catalysis, ATP synthesis in the catalytic domain of F(1) is coupled via a rotary mechanism of the central stalk subunits to proton translocation. This protein is part of the stalk that links CF(0) to CF(1). It either transmits conformational changes from CF(0) to CF(1) or is implicated in proton conduction. This Malacoplasma penetrans (strain HF-2) (Mycoplasma penetrans) protein is ATP synthase subunit delta.